A 48-amino-acid chain; its full sequence is uncharacterized protein (48 aa).

The disordered stretch occupies residues 1–48; that stretch reads MTKIPINIPATSGKIKFGITPSSNKSPSLSPSPSNGQLGGGRGYILEP. Positions 21–36 are enriched in low complexity; sequence PSSNKSPSLSPSPSNG. The span at 37–48 shows a compositional bias: gly residues; the sequence is QLGGGRGYILEP.

This is an uncharacterized protein from Dictyostelium discoideum (Social amoeba).